The sequence spans 127 residues: Fatty acid-binding protein, liver-type (127 aa).

It belongs to the calycin superfamily. Fatty-acid binding protein (FABP) family.

Its subcellular location is the cytoplasm. The sequence is that of Fatty acid-binding protein, liver-type (fabp1) from Epinephelus coioides (Orange-spotted grouper).